Reading from the N-terminus, the 89-residue chain is uncharacterized protein (89 aa).

Helical transmembrane passes span 9–29 (ICNF…LHSI), 35–55 (ISLS…YIYL), and 65–85 (ILFA…FGTS).

It localises to the membrane. This is an uncharacterized protein from Schizosaccharomyces pombe (strain 972 / ATCC 24843) (Fission yeast).